Consider the following 125-residue polypeptide: Holo-[acyl-carrier-protein] synthase (125 aa).

Aspartate 6 and glutamate 55 together coordinate Mg(2+).

The protein belongs to the P-Pant transferase superfamily. AcpS family. It depends on Mg(2+) as a cofactor.

Its subcellular location is the cytoplasm. It carries out the reaction apo-[ACP] + CoA = holo-[ACP] + adenosine 3',5'-bisphosphate + H(+). Its function is as follows. Transfers the 4'-phosphopantetheine moiety from coenzyme A to a Ser of acyl-carrier-protein. In Chlorobium phaeovibrioides (strain DSM 265 / 1930) (Prosthecochloris vibrioformis (strain DSM 265)), this protein is Holo-[acyl-carrier-protein] synthase.